Consider the following 415-residue polypeptide: Serine hydroxymethyltransferase 2 (415 aa).

Residues leucine 122 and 126–128 (GHL) contribute to the (6S)-5,6,7,8-tetrahydrofolate site. Lysine 230 carries the N6-(pyridoxal phosphate)lysine modification.

This sequence belongs to the SHMT family. In terms of assembly, homodimer. Requires pyridoxal 5'-phosphate as cofactor.

The protein resides in the cytoplasm. It carries out the reaction (6R)-5,10-methylene-5,6,7,8-tetrahydrofolate + glycine + H2O = (6S)-5,6,7,8-tetrahydrofolate + L-serine. Its pathway is one-carbon metabolism; tetrahydrofolate interconversion. It participates in amino-acid biosynthesis; glycine biosynthesis; glycine from L-serine: step 1/1. Its function is as follows. Catalyzes the reversible interconversion of serine and glycine with tetrahydrofolate (THF) serving as the one-carbon carrier. This reaction serves as the major source of one-carbon groups required for the biosynthesis of purines, thymidylate, methionine, and other important biomolecules. Also exhibits THF-independent aldolase activity toward beta-hydroxyamino acids, producing glycine and aldehydes, via a retro-aldol mechanism. The polypeptide is Serine hydroxymethyltransferase 2 (Burkholderia lata (strain ATCC 17760 / DSM 23089 / LMG 22485 / NCIMB 9086 / R18194 / 383)).